Reading from the N-terminus, the 712-residue chain is Protein TAPT1 homolog (712 aa).

Over residues 1 to 21 the composition is skewed to low complexity; it reads MNNVPSTSRENSRNPSESSSS. Disordered stretches follow at residues 1-22 and 44-66; these read MNNVPSTSRENSRNPSESSSSI and ITMSAPPSPATPRKIDFSAEIET. 7 helical membrane-spanning segments follow: residues 196–216, 222–242, 305–325, 379–399, 402–422, 470–490, and 497–517; these read FFYLFTFLPLRFLMSIFGALL, TSAETCDFLKVVIIVAASMLI, TCGHLIVAILYATLHSFLVIL, HIFALLFVVMIRNMTAVNWNI, FTEMIPDIIMVVGCEYFVDWL, GFIPIPLSIMIIRVLSQTFTL, and IIFGIGWLLVFAVKICNGVVM. Positions 596-619 are enriched in basic and acidic residues; it reads EIRRSTDRETAVSHLTARSDERTP. A disordered region spans residues 596–712; sequence EIRRSTDRET…MPEQGVQRIE (117 aa). Residues 656-667 are compositionally biased toward polar residues; that stretch reads TENNTNSNSEQA. Over residues 675-692 the composition is skewed to low complexity; sequence TAAPVTSSASTNTNATSS.

The protein belongs to the TAPT1 family.

Its subcellular location is the membrane. The chain is Protein TAPT1 homolog from Caenorhabditis elegans.